The primary structure comprises 153 residues: MLKQVQKGFTLIELMIVIAIIGILAAIALPAYQDYVARSQMSEAFNLAGGQKGAVSEYYSDKGVWPADNAAAGIAATVNGKYVNSVVVSAAGTNGVITATMKSTGVAKGVQGKTLALKGTANDGSFSWECSSNADAKYLPSSCRNAATPTPTP.

Residues 1 to 8 constitute a propeptide, leader sequence; the sequence is MLKQVQKG. Phe-9 carries the N-methylphenylalanine modification. The chain crosses the membrane as a helical span at residues 9 to 29; the sequence is FTLIELMIVIAIIGILAAIAL. A disulfide bridge connects residues Cys-130 and Cys-143.

The protein belongs to the N-Me-Phe pilin family.

It is found in the fimbrium. The protein resides in the membrane. This Eikenella corrodens protein is Fimbrial protein EcpC (ecpC).